The following is a 955-amino-acid chain: Probable autotransporter YcgV (955 aa).

Positions 616-659 are disordered; sequence ASGTVPEPTPNPEPTPAPAQPPIVNPDPTPEPAPTPKPTTTADA. The span at 622-652 shows a compositional bias: pro residues; the sequence is EPTPNPEPTPAPAQPPIVNPDPTPEPAPTPK. An Autotransporter domain is found at 687-955; sequence NQSKDGNIWL…QVNGGYRFSF (269 aa).

Upon overexpression shows increased adherence to polyvinyl chloride (PVC) plates, increased mature biofilm formation. The protein is Probable autotransporter YcgV (ycgV) of Escherichia coli (strain K12).